We begin with the raw amino-acid sequence, 770 residues long: Signal transducer and activator of transcription 3 (770 aa).

A2 carries the N-acetylalanine modification. N6-acetyllysine occurs at positions 49 and 87. The Essential for nuclear import signature appears at 150–162 (DVRKRVQDLEQKM). The 91-residue stretch at 580–670 (WNEGYIMGFI…DATNILVSPL (91 aa)) folds into the SH2 domain. Allysine; alternate occurs at positions 601, 615, and 631. An N6-acetyllysine; alternate mark is found at K601, K615, and K631. Y640 bears the Phosphotyrosine; by TYK2 mark. The residue at position 685 (K685) is an Allysine; alternate. K685 carries the N6-acetyllysine; alternate modification. Position 704 is a phosphotyrosine (P704). At Y705 the chain carries Phosphotyrosine; by FER and PTK6. Residue K707 is modified to N6-acetyllysine. T714 is subject to Phosphothreonine. S727 carries the post-translational modification Phosphoserine; by DYRK2, NLK, NEK6, IRAK1, RPS6KA5, ZIPK/DAPK3 and PKC/PRKCE.

Belongs to the transcription factor STAT family. Forms a homodimer or a heterodimer with a related family member (at least STAT1). Component of a promoter-binding complex composed of STAT3, NFATC3 and NFATC4; complex formation is enhanced by calcineurin. Interacts with IL31RA, NCOA1, PELP1, SIPAR, SOCS7, STATIP1 and TMF1. Interacts with IL23R in presence of IL23. Interacts (via SH2 domain) with NLK. Interacts with ARL2BP; the interaction is enhanced by LIF and JAK1 expression. Interacts with KPNA4 and KPNA5; KPNA4 may be the primary mediator of nuclear import. Interacts with CAV2; the interaction is increased on insulin-induced tyrosine phosphorylation of CAV2 and leads to STAT3 activation. Interacts with ARL2BP; interaction is enhanced with ARL2. Interacts with NEK6. Binds to CDK9 when activated and nuclear. Interacts with BMX. Interacts with ZIPK/DAPK3. Interacts with PIAS3; the interaction occurs on stimulation by IL6, CNTF or OSM and inhibits the DNA binding activity of STAT3. In prostate cancer cells, interacts with PRKCE and promotes DNA binding activity of STAT3. Interacts with STMN3, antagonizing its microtubule-destabilizing activity. Interacts with the 'Lys-129' acetylated form of BIRC5/survivin. Interacts with FER. Interacts (via SH2 domain) with EIF2AK2/PKR (via the kinase catalytic domain). Interacts with INPP5F; the interaction is independent of STAT3 Tyr-705 phosphorylation status. Interacts with FGFR4. Interacts with OCIAD1. Interacts with OCIAD2. Interacts (unphosphorylated or phosphorylated at Ser-727) with PHB1. Interacts and may form heterodimers with NHLH1. Found in a complex with SLC39A6, SLC39A10 and with the 'Ser-727' phosphorylated form of STAT3 throughout mitosis. Interacts (when phosphorylated at Tyr-705) with CD274/PD-L1; promoting nuclear translocation of CD274/PD-L1. Interacts (when acetylated) with EP300 (via bromo domain); interaction takes place following STAT3 acetylation by EP300 and promotes enhanceosome assembly. Interacts (when acetylated) with BRD2 (via bromo domain); interaction promotes STAT3 recruitment to chromatin and T-helper Th17 cell differentiation. Interacts with FAM220A/SIPAR; the interaction occurs in both the nucleus and the cytoplasm, is enhanced by IL6 and promotes STAT3 dephosphorylation. Interacts in both unphosphorylated and phosphorylated forms with FAM220A but interacts preferentially in the phosphorylated form in the nucleus. Interacts with PTPN2; the interaction is promoted by FAM220A and leads to STAT3 dephosphorylation which negatively regulates STAT3 transcriptional activator activity. As to quaternary structure, (Microbial infection) Interacts with HCV core protein. In terms of assembly, (Microbial infection) Interacts with S.typhimurium SarA. (Microbial infection) Interacts with human cytomegalovirus (HHV-5) immediate early protein IE1; this interaction leads to STAT3 nuclear accumulation and disruption of IL6-induced STAT3 phosphorylation. Post-translationally, tyrosine phosphorylated upon stimulation with EGF. Tyrosine phosphorylated in response to constitutively activated FGFR1, FGFR2, FGFR3 and FGFR4. Activated through tyrosine phosphorylation by BMX. Tyrosine phosphorylated in response to IL6, IL11, LIF, CNTF, KITLG/SCF, CSF1, EGF, PDGF, IFN-alpha, LEP and OSM. Activated KIT promotes phosphorylation on tyrosine residues and subsequent translocation to the nucleus. Phosphorylated on serine upon DNA damage, probably by ATM or ATR. Serine phosphorylation is important for the formation of stable DNA-binding STAT3 homodimers and maximal transcriptional activity. ARL2BP may participate in keeping the phosphorylated state of STAT3 within the nucleus. Upon LPS challenge, phosphorylated within the nucleus by IRAK1. Upon erythropoietin treatment, phosphorylated on Ser-727 by RPS6KA5. Dephosphorylation on tyrosine residues by PTPN2 negatively regulates IL6/interleukin-6 signaling. Phosphorylation at Tyr-705 by PTK6, isoform M2 of PKM (PKM2) or FER leads to an increase of its transcriptional activity. Phosphorylation at Tyr-705 is increased in the presence of calcineurin. Phosphorylation at Tyr-640 by TYK2 negatively regulates transcriptional activity. Acetylated on lysine residues by EP300/p300, promoting its activation. Acetylation at Lys-49 and Lys-87 by EP300/p300 promotes its activation. Acetylation at Lys-87 by EP300/p300 promotes its association with BRD2 and recruitment to chromatin. Deacetylated at Lys-49 and Lys-87 by HDAC1. Acetylation at Lys-685 by EP300/p300 promotes its homodimerization and activation. Deacetylated at Lys-685 by HDAC3. Acetylated on lysine residues by CREBBP. Deacetylation by LOXL3 leads to disrupt STAT3 dimerization and inhibit STAT3 transcription activity. Oxidation of lysine residues to allysine on STAT3 preferentially takes place on lysine residues that are acetylated. In terms of processing, some lysine residues are oxidized to allysine by LOXL3, leading to disrupt STAT3 dimerization and inhibit STAT3 transcription activity. Oxidation of lysine residues to allysine on STAT3 preferentially takes place on lysine residues that are acetylated. Post-translationally, (Microbial infection) Phosphorylated on Tyr-705 in the presence of S.typhimurium SarA. Heart, brain, placenta, lung, liver, skeletal muscle, kidney and pancreas. Expressed in naive CD4(+) T cells as well as T-helper Th17, Th1 and Th2 cells.

The protein localises to the cytoplasm. The protein resides in the nucleus. Functionally, signal transducer and transcription activator that mediates cellular responses to interleukins, KITLG/SCF, LEP and other growth factors. Once activated, recruits coactivators, such as NCOA1 or MED1, to the promoter region of the target gene. May mediate cellular responses to activated FGFR1, FGFR2, FGFR3 and FGFR4. Upon activation of IL6ST/gp130 signaling by interleukin-6 (IL6), binds to the IL6-responsive elements identified in the promoters of various acute-phase protein genes. Activated by IL31 through IL31RA. Acts as a regulator of inflammatory response by regulating differentiation of naive CD4(+) T-cells into T-helper Th17 or regulatory T-cells (Treg): acetylation promotes its transcription activity and cell differentiation while deacetylation and oxidation of lysine residues by LOXL3 inhibits differentiation. Involved in cell cycle regulation by inducing the expression of key genes for the progression from G1 to S phase, such as CCND1. Mediates the effects of LEP on melanocortin production, body energy homeostasis and lactation. May play an apoptotic role by transctivating BIRC5 expression under LEP activation. Cytoplasmic STAT3 represses macroautophagy by inhibiting EIF2AK2/PKR activity. Plays a crucial role in basal beta cell functions, such as regulation of insulin secretion. Following JAK/STAT signaling activation and as part of a complex with NFATC3 and NFATC4, binds to the alpha-beta E4 promoter region of CRYAB and activates transcription in cardiomyocytes. The chain is Signal transducer and activator of transcription 3 from Homo sapiens (Human).